The chain runs to 267 residues: Hydroxypyruvate/pyruvate aldolase Bphyt_5830 (267 aa).

Catalysis depends on histidine 48, which acts as the Proton acceptor. Positions 152 and 178 each coordinate a divalent metal cation.

Belongs to the HpcH/HpaI aldolase family. Requires a divalent metal cation as cofactor.

It carries out the reaction D-glyceraldehyde + 3-hydroxypyruvate = 2-dehydro-D-galactonate. It catalyses the reaction D-glyceraldehyde + 3-hydroxypyruvate = (3R,4S,5R)-3,4,5,6-tetrahydroxy-2-oxohexanoate. The catalysed reaction is D-glyceraldehyde + pyruvate = 2-dehydro-3-deoxy-L-galactonate. Aldolase which can catalyze in vitro the aldolisation reaction between hydroxypyruvate (HPA) or pyruvate (PA) and D-glyceraldehyde (D-GA). The condensation of hydroxypyruvate and D-glyceraldehyde produces 2-dehydro-D-galactonate as the major product and (3R,4S,5R)-3,4,5,6-tetrahydroxy-2-oxohexanoate. The condensation of pyruvate and D-glyceraldehyde produces 2-dehydro-3-deoxy-L-galactonate. The polypeptide is Hydroxypyruvate/pyruvate aldolase Bphyt_5830 (Paraburkholderia phytofirmans (strain DSM 17436 / LMG 22146 / PsJN) (Burkholderia phytofirmans)).